Here is a 133-residue protein sequence, read N- to C-terminus: Secretin (133 aa).

The signal sequence occupies residues 1 to 22; it reads MEPPLPTPMLLLLLLLLSSSAA. Residues 23–30 constitute a propeptide that is removed on maturation; it reads LPAPPRTP. Valine 58 carries the post-translational modification Valine amide. At serine 62 the chain carries Phosphoserine. Positions 62 to 133 are excised as a propeptide; the sequence is SEQDTENIPE…EWTETTRPPR (72 aa).

It belongs to the glucagon family. Highly expressed in the intestine. Also expressed in the hippocampus, cerebellum and the brain stem in adult mouse brain. In the hippocampus, expressed in the dentate gyrus, the hilus and the molecular layer.

The protein localises to the secreted. In terms of biological role, hormone involved in different processes, such as regulation of the pH of the duodenal content, food intake and water homeostasis. Exerts its biological effects by binding to secretin receptor (SCTR), a G-protein coupled receptor expressed in the basolateral domain of several cells. Acts as a key gastrointestinal hormone by regulating the pH of the duodenal content. Secreted by S cells of the duodenum in the crypts of Lieberkuehn and regulates the pH of the duodenum by (1) inhibiting the secretion of gastric acid from the parietal cells of the stomach and (2) stimulating the production of bicarbonate (NaHCO(3)) from the ductal cells of the pancreas. Production of bicarbonate is essential to neutralize the pH and ensure no damage is done to the small intestine by the gastric acid. In addition to regulating the pH of the duodenal content, plays a central role in diet induced thermogenesis: acts as a non-sympathetic brown fat (BAT) activator mediating prandial thermogenesis, which consequentially induces satiation. Mechanistically, secretin released by the gut after a meal binds to secretin receptor (SCTR) in brown adipocytes, activating brown fat thermogenesis by stimulating lipolysis, which is sensed in the brain and promotes satiation. Also able to stimulate lipolysis in white adipocytes. Also plays an important role in cellular osmoregulation: released into the systemic circulation in response to hyperosmolality and acts at different levels in the hypothalamus, pituitary and kidney to regulate water homeostasis. Also plays a role in the central nervous system, possibly by acting as a neuropeptide hormone: required for hippocampal synaptic function and neural progenitor cells maintenance. This is Secretin from Mus musculus (Mouse).